A 364-amino-acid polypeptide reads, in one-letter code: Fructose-bisphosphate aldolase C-A (364 aa).

Substrate-binding residues include Arg56 and Lys147. The active-site Proton acceptor is the Glu188. The active-site Schiff-base intermediate with dihydroxyacetone-P is Lys230.

This sequence belongs to the class I fructose-bisphosphate aldolase family. As to quaternary structure, homotetramer. In terms of tissue distribution, expressed specifically in Purkinje cells in the brain.

The enzyme catalyses beta-D-fructose 1,6-bisphosphate = D-glyceraldehyde 3-phosphate + dihydroxyacetone phosphate. The protein operates within carbohydrate degradation; glycolysis; D-glyceraldehyde 3-phosphate and glycerone phosphate from D-glucose: step 4/4. The polypeptide is Fructose-bisphosphate aldolase C-A (Danio rerio (Zebrafish)).